The sequence spans 279 residues: 3-methyl-2-oxobutanoate hydroxymethyltransferase (279 aa).

Mg(2+)-binding residues include aspartate 43 and aspartate 82. 3-methyl-2-oxobutanoate is bound by residues aspartate 43–serine 44, aspartate 82, and lysine 112. Glutamate 114 serves as a coordination point for Mg(2+). Glutamate 181 functions as the Proton acceptor in the catalytic mechanism.

The protein belongs to the PanB family. In terms of assembly, homodecamer; pentamer of dimers. It depends on Mg(2+) as a cofactor.

The protein resides in the cytoplasm. It catalyses the reaction 3-methyl-2-oxobutanoate + (6R)-5,10-methylene-5,6,7,8-tetrahydrofolate + H2O = 2-dehydropantoate + (6S)-5,6,7,8-tetrahydrofolate. The protein operates within cofactor biosynthesis; (R)-pantothenate biosynthesis; (R)-pantoate from 3-methyl-2-oxobutanoate: step 1/2. Catalyzes the reversible reaction in which hydroxymethyl group from 5,10-methylenetetrahydrofolate is transferred onto alpha-ketoisovalerate to form ketopantoate. The chain is 3-methyl-2-oxobutanoate hydroxymethyltransferase from Lysinibacillus sphaericus (strain C3-41).